A 364-amino-acid chain; its full sequence is Formate dehydrogenase (364 aa).

The substrate site is built by V93 and N119. NAD(+) is bound by residues 174-175 (RI), D195, 230-234 (PLHAG), T256, D282, and 311-314 (HYSG).

This sequence belongs to the D-isomer specific 2-hydroxyacid dehydrogenase family. FDH subfamily. Homodimer.

It is found in the cytoplasm. The enzyme catalyses formate + NAD(+) = CO2 + NADH. With respect to regulation, cu(2+), Hg and p-chloromercuribenzoate are strong inhibitors of enzyme activity and Ca(2+), Mg(2+), Zn(2+), Mn(2+), Cd(2+) and Sn(2+) have no effect on activity indicating a cysteine residue in the protein is essential for enzyme activity or to maintain the proper structure of the enzyme. Nitrite and nitrate inhibit some enzyme activity, however cyanide, azide, thiocyanate and cyanate are strong inhibitors of the enzymatic reaction. The inhibition of cyanide is competitive with formate and reversible. Catalyzes the NAD(+)-dependent oxidation of formate to carbon dioxide. Formate oxidation is the final step in the methanol oxidation pathway in methylotrophic microorganisms. Has a role in the detoxification of exogenous formate in non-methylotrophic organisms. This chain is Formate dehydrogenase, found in Candida boidinii (Yeast).